Reading from the N-terminus, the 37-residue chain is M-oxotoxin-Ot2c (37 aa).

In terms of tissue distribution, expressed by the venom gland.

The protein localises to the secreted. Functionally, disrupts biological membranes, particularly those rich in phosphocholine. Has antimicrobial activity against Gram-negative bacterium E.coli, Gram-positive bacteria B.subtilis and S.aureus, and hemolytic activity against sheep, pig and guinea pig red blood cells. Has insecticidal activity against S.frugiperda ovarian cells by opening non-selective ion channels. Enhances the insecticidal activity of spider venom neurotoxic peptides. In Oxyopes takobius (Lynx spider), this protein is M-oxotoxin-Ot2c.